The sequence spans 159 residues: Transcriptional repressor NrdR (159 aa).

Positions 1-11 are enriched in polar residues; it reads MQCPTCQNTDS. The tract at residues 1–21 is disordered; sequence MQCPTCQNTDSRVLESRSADS. Residues 3–34 fold into a zinc finger; the sequence is CPTCQNTDSRVLESRSADSGKSVRRRRECLNC. Positions 49–139 constitute an ATP-cone domain; sequence VSVLKKDGGR…VYRKFNGVKD (91 aa).

It belongs to the NrdR family. It depends on Zn(2+) as a cofactor.

Its function is as follows. Negatively regulates transcription of bacterial ribonucleotide reductase nrd genes and operons by binding to NrdR-boxes. This Prochlorococcus marinus (strain AS9601) protein is Transcriptional repressor NrdR.